The sequence spans 462 residues: Fumarate hydratase class II (462 aa).

Residues 97 to 99, 127 to 130, 137 to 139, and Thr185 contribute to the substrate site; these read SGT, HPND, and SSN. Catalysis depends on His186, which acts as the Proton donor/acceptor. The active site involves Ser316. Residues Ser317 and 322–324 each bind substrate; that span reads KVN.

This sequence belongs to the class-II fumarase/aspartase family. Fumarase subfamily. In terms of assembly, homotetramer.

Its subcellular location is the cytoplasm. It catalyses the reaction (S)-malate = fumarate + H2O. Its pathway is carbohydrate metabolism; tricarboxylic acid cycle; (S)-malate from fumarate: step 1/1. Involved in the TCA cycle. Catalyzes the stereospecific interconversion of fumarate to L-malate. In Bacillus anthracis, this protein is Fumarate hydratase class II.